The sequence spans 86 residues: MDPVDPNQEPWNHPGSQPRTACNNCYCKKCCYHCQLCFLKKGLGIYYGRKKRRQRRGTPKSLQDHQTLIPKQPLSRTSGDPTGPEK.

The segment at 1–24 is interaction with human CREBBP; the sequence is MDPVDPNQEPWNHPGSQPRTACNN. The tract at residues 1–48 is transactivation; it reads MDPVDPNQEPWNHPGSQPRTACNNCYCKKCCYHCQLCFLKKGLGIYYG. Zn(2+) is bound by residues C22, C25, and C27. The interval 22-37 is cysteine-rich; the sequence is CNNCYCKKCCYHCQLC. An N6-acetyllysine; by host PCAF modification is found at K28. Zn(2+) is bound by residues C30, H33, C34, and C37. The core stretch occupies residues 38 to 48; it reads FLKKGLGIYYG. The segment covering 48-58 has biased composition (basic residues); the sequence is GRKKRRQRRGT. The tract at residues 48 to 86 is disordered; sequence GRKKRRQRRGTPKSLQDHQTLIPKQPLSRTSGDPTGPEK. Positions 49 to 57 match the Nuclear localization signal, RNA-binding (TAR), and protein transduction motif; sequence RKKRRQRRG. Positions 49–86 are interaction with the host capping enzyme RNGTT; that stretch reads RKKRRQRRGTPKSLQDHQTLIPKQPLSRTSGDPTGPEK. N6-acetyllysine; by host EP300 and GCN5L2 occurs at positions 50 and 51. Asymmetric dimethylarginine; by host PRMT6 is present on residues R52 and R53. K71 participates in a covalent cross-link: Glycyl lysine isopeptide (Lys-Gly) (interchain with G-Cter in ubiquitin).

It belongs to the lentiviruses Tat family. As to quaternary structure, interacts with host CCNT1. Associates with the P-TEFb complex composed at least of Tat, P-TEFb (CDK9 and CCNT1), TAR RNA, RNA Pol II. Recruits the HATs CREBBP, TAF1/TFIID, EP300, PCAF and GCN5L2. Interacts with host KAT5/Tip60; this interaction targets the latter to degradation. Interacts with the host deacetylase SIRT1. Interacts with host capping enzyme RNGTT; this interaction stimulates RNGTT. Binds to host KDR, and to the host integrins ITGAV/ITGB3 and ITGA5/ITGB1. Interacts with host KPNB1/importin beta-1 without previous binding to KPNA1/importin alpha-1. Interacts with EIF2AK2. Interacts with host nucleosome assembly protein NAP1L1; this interaction may be required for the transport of Tat within the nucleus, since the two proteins interact at the nuclear rim. Interacts with host C1QBP/SF2P32; this interaction involves lysine-acetylated Tat. Interacts with the host chemokine receptors CCR2, CCR3 and CXCR4. Interacts with host DPP4/CD26; this interaction may trigger an anti-proliferative effect. Interacts with host LDLR. Interacts with the host extracellular matrix metalloproteinase MMP1. Interacts with host PRMT6; this interaction mediates Tat's methylation. Interacts with, and is ubiquitinated by MDM2/Hdm2. Interacts with host PSMC3 and HTATIP2. Interacts with STAB1; this interaction may overcome SATB1-mediated repression of IL2 and IL2RA (interleukin) in T cells by binding to the same domain than HDAC1. Interacts (when acetylated) with human CDK13, thereby increasing HIV-1 mRNA splicing and promoting the production of the doubly spliced HIV-1 protein Nef. Interacts with host TBP; this interaction modulates the activity of transcriptional pre-initiation complex. Interacts with host RELA. Interacts with host PLSCR1; this interaction negatively regulates Tat transactivation activity by altering its subcellular distribution. Asymmetrical arginine methylation by host PRMT6 seems to diminish the transactivation capacity of Tat and affects the interaction with host CCNT1. Post-translationally, acetylation by EP300, CREBBP, GCN5L2/GCN5 and PCAF regulates the transactivation activity of Tat. EP300-mediated acetylation of Lys-50 promotes dissociation of Tat from the TAR RNA through the competitive binding to PCAF's bromodomain. In addition, the non-acetylated Tat's N-terminus can also interact with PCAF. PCAF-mediated acetylation of Lys-28 enhances Tat's binding to CCNT1. Lys-50 is deacetylated by SIRT1. In terms of processing, polyubiquitination by host MDM2 does not target Tat to degradation, but activates its transactivation function and fosters interaction with CCNT1 and TAR RNA. Phosphorylated by EIF2AK2 on serine and threonine residues adjacent to the basic region important for TAR RNA binding and function. Phosphorylation of Tat by EIF2AK2 is dependent on the prior activation of EIF2AK2 by dsRNA.

It is found in the host nucleus. The protein resides in the host nucleolus. Its subcellular location is the host cytoplasm. The protein localises to the secreted. Functionally, transcriptional activator that increases RNA Pol II processivity, thereby increasing the level of full-length viral transcripts. Recognizes a hairpin structure at the 5'-LTR of the nascent viral mRNAs referred to as the transactivation responsive RNA element (TAR) and recruits the cyclin T1-CDK9 complex (P-TEFb complex) that will in turn hyperphosphorylate the RNA polymerase II to allow efficient elongation. The CDK9 component of P-TEFb and other Tat-activated kinases hyperphosphorylate the C-terminus of RNA Pol II that becomes stabilized and much more processive. Other factors such as HTATSF1/Tat-SF1, SUPT5H/SPT5, and HTATIP2 are also important for Tat's function. Besides its effect on RNA Pol II processivity, Tat induces chromatin remodeling of proviral genes by recruiting the histone acetyltransferases (HATs) CREBBP, EP300 and PCAF to the chromatin. This also contributes to the increase in proviral transcription rate, especially when the provirus integrates in transcriptionally silent region of the host genome. To ensure maximal activation of the LTR, Tat mediates nuclear translocation of NF-kappa-B by interacting with host RELA. Through its interaction with host TBP, Tat may also modulate transcription initiation. Tat can reactivate a latently infected cell by penetrating in it and transactivating its LTR promoter. In the cytoplasm, Tat is thought to act as a translational activator of HIV-1 mRNAs. Extracellular circulating Tat can be endocytosed by surrounding uninfected cells via the binding to several surface receptors such as CD26, CXCR4, heparan sulfate proteoglycans (HSPG) or LDLR. Neurons are rarely infected, but they internalize Tat via their LDLR. Through its interaction with nuclear HATs, Tat is potentially able to control the acetylation-dependent cellular gene expression. Modulates the expression of many cellular genes involved in cell survival, proliferation or in coding for cytokines or cytokine receptors. Tat plays a role in T-cell and neurons apoptosis. Tat induced neurotoxicity and apoptosis probably contribute to neuroAIDS. Circulating Tat also acts as a chemokine-like and/or growth factor-like molecule that binds to specific receptors on the surface of the cells, affecting many cellular pathways. In the vascular system, Tat binds to ITGAV/ITGB3 and ITGA5/ITGB1 integrins dimers at the surface of endothelial cells and competes with bFGF for heparin-binding sites, leading to an excess of soluble bFGF. The protein is Protein Tat of Human immunodeficiency virus type 1 group M subtype H (isolate VI991) (HIV-1).